The primary structure comprises 462 residues: Trigger factor (462 aa).

A PPIase FKBP-type domain is found at 163-259; sequence TDYVNIDLQR…VNDVKRRDLP (97 aa). Positions 439-462 are disordered; that stretch reads SREEFEEEMQQQQQQQAQRQRMAP. Residues 448–462 are compositionally biased toward low complexity; it reads QQQQQQQAQRQRMAP.

This sequence belongs to the FKBP-type PPIase family. Tig subfamily.

It localises to the cytoplasm. It catalyses the reaction [protein]-peptidylproline (omega=180) = [protein]-peptidylproline (omega=0). Functionally, involved in protein export. Acts as a chaperone by maintaining the newly synthesized protein in an open conformation. Functions as a peptidyl-prolyl cis-trans isomerase. The sequence is that of Trigger factor from Salinibacter ruber (strain DSM 13855 / M31).